A 419-amino-acid chain; its full sequence is Chalcone synthase D (419 aa).

Cys-164 is an active-site residue.

Belongs to the thiolase-like superfamily. Chalcone/stilbene synthases family.

The enzyme catalyses (E)-4-coumaroyl-CoA + 3 malonyl-CoA + 3 H(+) = 2',4,4',6'-tetrahydroxychalcone + 3 CO2 + 4 CoA. It participates in secondary metabolite biosynthesis; flavonoid biosynthesis. Functionally, the primary product of this enzyme is 4,2',4',6'-tetrahydroxychalcone (also termed naringenin-chalcone or chalcone) which can under specific conditions spontaneously isomerize into naringenin. This is Chalcone synthase D (CHSD) from Petunia hybrida (Petunia).